The following is an 857-amino-acid chain: QIVGGLIGGHHDSKKVKGTVVMMKKNALDFTDLAGSLTDKIFEALGQKVSFQLISSVQSDPANGLQGKHSNPAYLENFLFTLTPLAAGETAFGVTFDWNEEFGVPGAFIIKNTHINEFFLKSLTLEDVPNHGKVHFVCNSWVYPSFRYKSDRIFFANQPYLPSETPELLRKYRENELLTLRGDGTGKREAWDRIYDYDVYNDLGNPDQGEQNVRTTLGGSADYPYPRRGRTGRPPTRTDPKSESRIPLILSLDIYVPRDERFGHLKMSDFLTYALKSIVQFILPELHALFDGTPNEFDSFEDVLRLYEGGIKLPQGPLFKALTAAIPLEMMKELLRTDGEGILRFPTPLVIKDSKTAWRTDEEFAREMLAGVNPIIISRLQEFPPKSKLDPEAYGNQNSTITAEHIEDKLDGLTVDEAMNNNKLFILNHHDVLIPYLRRINTTTTKTYASRTLLFLQDNGSLKPLAIELSLPHPDGDQFGVISKVYTPSDQGVESSIWQLAKAYVAVNDSGVHQLISHWLNTHAVIEPFVIATNRQLSVLHPIHKLLYPHFRDTMNINAMARQILINAGGVLESTVFPSKFAMEMSAVVYKDWVFPDQALPADLVKRGVAVEDSSSPHGVRLLIEDYPYAVDGLEIWSAIKSWVTDYCSFYYGSDEEILKDNELQAWWKELREVGHGDKKNEPWWPEMETPQELIDSCTTIIWIASALHAAVNFGQYPYAGYLPNRPTVSRRFMPEPGTPEYEELKKNPDKAFLKTITAQLQTLLGVSLIEILSRHTTDEIYLGQRESPEWTKDKEPLAAFDKFGKKLTDIEKQIIQRNGDNILTNRSGPVNAPYTLLFPTSEGGLTGKGIPNSVSI.

A PLAT domain is found at 26 to 156; sequence NALDFTDLAG…RYKSDRIFFA (131 aa). A Lipoxygenase domain is found at 159 to 857; it reads PYLPSETPEL…GKGIPNSVSI (699 aa). The segment at 205–243 is disordered; it reads NPDQGEQNVRTTLGGSADYPYPRRGRTGRPPTRTDPKSE. Polar residues predominate over residues 208–218; that stretch reads QGEQNVRTTLG. Positions 518, 523, 709, 713, and 857 each coordinate Fe cation.

It belongs to the lipoxygenase family. As to quaternary structure, monomer. It depends on Fe cation as a cofactor. As to expression, expressed in tubers and roots. Detected in leaves, petioles and stems.

The protein resides in the cytoplasm. It carries out the reaction (9Z,12Z)-octadecadienoate + O2 = (9S)-hydroperoxy-(10E,12Z)-octadecadienoate. It functions in the pathway lipid metabolism; oxylipin biosynthesis. In terms of biological role, plant lipoxygenases may be involved in a number of diverse aspects of plant physiology including growth and development, pest resistance, and senescence or responses to wounding. Catalyzes the hydroperoxidation of lipids containing a cis,cis-1,4-pentadiene structure. Linoleic and linolenic acids are the preferred substrates, but is also active with arachidonic acid. The products are almost exclusively the S enantiomers. This Solanum tuberosum (Potato) protein is Linoleate 9S-lipoxygenase 6 (LOX1.6).